Here is a 418-residue protein sequence, read N- to C-terminus: Glutamyl-tRNA reductase (418 aa).

Substrate is bound by residues 49–52 (TCNR), Ser-108, 113–115 (EPQ), and Gln-119. Cys-50 functions as the Nucleophile in the catalytic mechanism. 188 to 193 (GAGETI) is an NADP(+) binding site.

Belongs to the glutamyl-tRNA reductase family. Homodimer.

It catalyses the reaction (S)-4-amino-5-oxopentanoate + tRNA(Glu) + NADP(+) = L-glutamyl-tRNA(Glu) + NADPH + H(+). It functions in the pathway porphyrin-containing compound metabolism; protoporphyrin-IX biosynthesis; 5-aminolevulinate from L-glutamyl-tRNA(Glu): step 1/2. In terms of biological role, catalyzes the NADPH-dependent reduction of glutamyl-tRNA(Glu) to glutamate 1-semialdehyde (GSA). The chain is Glutamyl-tRNA reductase from Aliivibrio fischeri (strain MJ11) (Vibrio fischeri).